We begin with the raw amino-acid sequence, 123 residues long: Small ribosomal subunit protein uS12 (123 aa).

A disordered region spans residues 1-28 (MPTIQQLIRKPRQPKVKRSKSQHLESCP). The span at 9 to 21 (RKPRQPKVKRSKS) shows a compositional bias: basic residues. Asp89 bears the 3-methylthioaspartic acid mark.

Belongs to the universal ribosomal protein uS12 family. In terms of assembly, part of the 30S ribosomal subunit. Contacts proteins S8 and S17. May interact with IF1 in the 30S initiation complex.

Functionally, with S4 and S5 plays an important role in translational accuracy. In terms of biological role, interacts with and stabilizes bases of the 16S rRNA that are involved in tRNA selection in the A site and with the mRNA backbone. Located at the interface of the 30S and 50S subunits, it traverses the body of the 30S subunit contacting proteins on the other side and probably holding the rRNA structure together. The combined cluster of proteins S8, S12 and S17 appears to hold together the shoulder and platform of the 30S subunit. This Dinoroseobacter shibae (strain DSM 16493 / NCIMB 14021 / DFL 12) protein is Small ribosomal subunit protein uS12.